Reading from the N-terminus, the 358-residue chain is DNA polymerase IV (358 aa).

In terms of domain architecture, UmuC spans 4 to 185 (IIHIDMDCYF…LSLRKIPGVG (182 aa)). Residues aspartate 8 and aspartate 103 each contribute to the Mg(2+) site. The active site involves glutamate 104.

Belongs to the DNA polymerase type-Y family. As to quaternary structure, monomer. The cofactor is Mg(2+).

The protein localises to the cytoplasm. It carries out the reaction DNA(n) + a 2'-deoxyribonucleoside 5'-triphosphate = DNA(n+1) + diphosphate. Functionally, poorly processive, error-prone DNA polymerase involved in untargeted mutagenesis. Copies undamaged DNA at stalled replication forks, which arise in vivo from mismatched or misaligned primer ends. These misaligned primers can be extended by PolIV. Exhibits no 3'-5' exonuclease (proofreading) activity. May be involved in translesional synthesis, in conjunction with the beta clamp from PolIII. The polypeptide is DNA polymerase IV (Shewanella baltica (strain OS155 / ATCC BAA-1091)).